The following is a 381-amino-acid chain: Pulmonary surfactant-associated protein B (381 aa).

A signal peptide spans 1-24 (MAESHLLQWLLLLLPTLCGPGTAA). In terms of domain architecture, Saposin A-type spans 25-65 (WTTSSLACAQGPEFWCQSLEQALQCRALGHCLQEVWGHVGA). Residues 25–200 (WTTSSLACAQ…PHTQDLSEQQ (176 aa)) constitute a propeptide that is removed on maturation. 3 consecutive Saposin B-type domains span residues 65–147 (ADDL…KSRQ), 204–281 (PLPY…SMDD), and 295–370 (RDSE…GTMS). 9 cysteine pairs are disulfide-bonded: Cys69-Cys143, Cys72-Cys137, Cys100-Cys112, Cys208-Cys277, Cys211-Cys271, Cys235-Cys246, Cys299-Cys366, Cys302-Cys360, and Cys325-Cys335. Asn129 carries N-linked (GlcNAc...) asparagine glycosylation. Residues 280 to 381 (DDSAGPRSPT…PLQCIHSPDL (102 aa)) constitute a propeptide that is removed on maturation. Asn311 is a glycosylation site (N-linked (GlcNAc...) asparagine).

In terms of assembly, homodimer; disulfide-linked.

Its subcellular location is the secreted. The protein resides in the extracellular space. It is found in the surface film. Functionally, pulmonary surfactant-associated proteins promote alveolar stability by lowering the surface tension at the air-liquid interface in the peripheral air spaces. SP-B increases the collapse pressure of palmitic acid to nearly 70 millinewtons per meter. The polypeptide is Pulmonary surfactant-associated protein B (SFTPB) (Homo sapiens (Human)).